The following is a 251-amino-acid chain: Aliphatic sulfonates import ATP-binding protein SsuB (251 aa).

In terms of domain architecture, ABC transporter spans 3–231 (VSINEVSKYF…PRNKTSQSFQ (229 aa)). 39–46 (GPSGCGKS) contacts ATP.

This sequence belongs to the ABC transporter superfamily. Aliphatic sulfonates importer (TC 3.A.1.17.2) family. The complex is composed of two ATP-binding proteins (SsuB), two transmembrane proteins (SsuC) and a solute-binding protein (SsuA).

It is found in the cell membrane. The enzyme catalyses ATP + H2O + aliphatic sulfonate-[sulfonate-binding protein]Side 1 = ADP + phosphate + aliphatic sulfonateSide 2 + [sulfonate-binding protein]Side 1.. Its function is as follows. Part of the ABC transporter complex SsuABC involved in aliphatic sulfonates import. Responsible for energy coupling to the transport system. This Bacillus anthracis protein is Aliphatic sulfonates import ATP-binding protein SsuB.